Reading from the N-terminus, the 343-residue chain is S-adenosylmethionine:tRNA ribosyltransferase-isomerase (343 aa).

This sequence belongs to the QueA family. In terms of assembly, monomer.

The protein localises to the cytoplasm. It catalyses the reaction 7-aminomethyl-7-carbaguanosine(34) in tRNA + S-adenosyl-L-methionine = epoxyqueuosine(34) in tRNA + adenine + L-methionine + 2 H(+). The protein operates within tRNA modification; tRNA-queuosine biosynthesis. Functionally, transfers and isomerizes the ribose moiety from AdoMet to the 7-aminomethyl group of 7-deazaguanine (preQ1-tRNA) to give epoxyqueuosine (oQ-tRNA). In Coxiella burnetii (strain RSA 331 / Henzerling II), this protein is S-adenosylmethionine:tRNA ribosyltransferase-isomerase.